A 101-amino-acid chain; its full sequence is Small ribosomal subunit protein uS14 (101 aa).

The protein belongs to the universal ribosomal protein uS14 family. As to quaternary structure, part of the 30S ribosomal subunit. Contacts proteins S3 and S10.

Its function is as follows. Binds 16S rRNA, required for the assembly of 30S particles and may also be responsible for determining the conformation of the 16S rRNA at the A site. This Ehrlichia canis (strain Jake) protein is Small ribosomal subunit protein uS14.